The sequence spans 78 residues: Acyl carrier protein (78 aa).

Residues 1 to 76 (MALFEDIQAV…DVVKYIEDNK (76 aa)) form the Carrier domain. S36 bears the O-(pantetheine 4'-phosphoryl)serine mark.

The protein belongs to the acyl carrier protein (ACP) family. 4'-phosphopantetheine is transferred from CoA to a specific serine of apo-ACP by AcpS. This modification is essential for activity because fatty acids are bound in thioester linkage to the sulfhydryl of the prosthetic group.

It localises to the cytoplasm. It functions in the pathway lipid metabolism; fatty acid biosynthesis. Its function is as follows. Carrier of the growing fatty acid chain in fatty acid biosynthesis. This is Acyl carrier protein from Helicobacter pylori (strain ATCC 700392 / 26695) (Campylobacter pylori).